Consider the following 512-residue polypeptide: GTPase Obg (512 aa).

The Obg domain occupies 2–159 (ATFVDTVTLH…GDVVLELKVV (158 aa)). The 177-residue stretch at 160–336 (ADVALVGYPS…LSFALAELVE (177 aa)) folds into the OBG-type G domain. GTP is bound by residues 166–173 (GYPSAGKS), 191–195 (FTTLH), 212–215 (DVPG), 288–291 (NKID), and 317–319 (STV). The Mg(2+) site is built by serine 173 and threonine 193. One can recognise an OCT domain in the interval 355–439 (PRAVNEKPFT…GDGIVFDWEP (85 aa)). Residues 491 to 512 (GEAGLWADEDGTDEDASSDAKA) are disordered. Acidic residues predominate over residues 497 to 512 (ADEDGTDEDASSDAKA).

Belongs to the TRAFAC class OBG-HflX-like GTPase superfamily. OBG GTPase family. In terms of assembly, monomer. Mg(2+) serves as cofactor.

Its subcellular location is the cytoplasm. In terms of biological role, an essential GTPase which binds GTP, GDP and possibly (p)ppGpp with moderate affinity, with high nucleotide exchange rates and a fairly low GTP hydrolysis rate. Plays a role in control of the cell cycle, stress response, ribosome biogenesis and in those bacteria that undergo differentiation, in morphogenesis control. The protein is GTPase Obg of Clavibacter michiganensis subsp. michiganensis (strain NCPPB 382).